The primary structure comprises 399 residues: Acetate kinase 2 (399 aa).

Asparagine 10 contacts Mg(2+). Lysine 17 is an ATP binding site. Arginine 89 provides a ligand contact to substrate. Aspartate 146 serves as the catalytic Proton donor/acceptor. Residues 206 to 210 (HLGNG), 281 to 283 (DCR), and 329 to 333 (GIGEN) contribute to the ATP site. Glutamate 384 is a Mg(2+) binding site.

The protein belongs to the acetokinase family. As to quaternary structure, homodimer. The cofactor is Mg(2+). Mn(2+) serves as cofactor.

It is found in the cytoplasm. The catalysed reaction is acetate + ATP = acetyl phosphate + ADP. The protein operates within metabolic intermediate biosynthesis; acetyl-CoA biosynthesis; acetyl-CoA from acetate: step 1/2. Catalyzes the formation of acetyl phosphate from acetate and ATP. Can also catalyze the reverse reaction. The sequence is that of Acetate kinase 2 from Neisseria meningitidis serogroup B (strain ATCC BAA-335 / MC58).